We begin with the raw amino-acid sequence, 374 residues long: Isocitrate dehydrogenase [NAD] catalytic subunit 5, mitochondrial (374 aa).

The N-terminal 44 residues, 1–44 (MTMAANLARRLIGNRSTQILGAVNSSSGAASSVARAFCSSTTPI), are a transit peptide targeting the mitochondrion. Residues arginine 127, arginine 137, arginine 158, and aspartate 245 each contribute to the substrate site. Aspartate 245, aspartate 269, and aspartate 273 together coordinate Mg(2+).

Belongs to the isocitrate and isopropylmalate dehydrogenases family. In terms of assembly, heterooligomer of catalytic and regulatory subunits. It depends on Mg(2+) as a cofactor. Requires Mn(2+) as cofactor. In terms of tissue distribution, ubiquitous.

Its subcellular location is the mitochondrion. It catalyses the reaction D-threo-isocitrate + NAD(+) = 2-oxoglutarate + CO2 + NADH. Functionally, performs an essential role in the oxidative function of the citric acid cycle. This Arabidopsis thaliana (Mouse-ear cress) protein is Isocitrate dehydrogenase [NAD] catalytic subunit 5, mitochondrial (IDH5).